Here is a 300-residue protein sequence, read N- to C-terminus: Ribosomal RNA small subunit methyltransferase H (300 aa).

S-adenosyl-L-methionine contacts are provided by residues 46–48, aspartate 65, phenylalanine 92, aspartate 107, and glutamine 114; that span reads GGH.

The protein belongs to the methyltransferase superfamily. RsmH family.

Its subcellular location is the cytoplasm. It catalyses the reaction cytidine(1402) in 16S rRNA + S-adenosyl-L-methionine = N(4)-methylcytidine(1402) in 16S rRNA + S-adenosyl-L-homocysteine + H(+). In terms of biological role, specifically methylates the N4 position of cytidine in position 1402 (C1402) of 16S rRNA. The sequence is that of Ribosomal RNA small subunit methyltransferase H from Prochlorococcus marinus (strain AS9601).